A 250-amino-acid chain; its full sequence is 5'-nucleotidase SurE (250 aa).

A divalent metal cation-binding residues include D9, D10, S40, and N92.

The protein belongs to the SurE nucleotidase family. The cofactor is a divalent metal cation.

It localises to the cytoplasm. The enzyme catalyses a ribonucleoside 5'-phosphate + H2O = a ribonucleoside + phosphate. Its function is as follows. Nucleotidase that shows phosphatase activity on nucleoside 5'-monophosphates. This is 5'-nucleotidase SurE from Idiomarina loihiensis (strain ATCC BAA-735 / DSM 15497 / L2-TR).